The following is a 316-amino-acid chain: Adenine deaminase (316 aa).

Residues His14, His16, and His194 each coordinate Zn(2+). The Proton donor role is filled by Glu197. Asp275 is a binding site for Zn(2+). Asp276 contacts substrate.

The protein belongs to the metallo-dependent hydrolases superfamily. Adenosine and AMP deaminases family. Adenine deaminase type 2 subfamily. Zn(2+) serves as cofactor.

The catalysed reaction is adenine + H2O + H(+) = hypoxanthine + NH4(+). Functionally, catalyzes the hydrolytic deamination of adenine to hypoxanthine. Plays an important role in the purine salvage pathway and in nitrogen catabolism. This is Adenine deaminase from Pseudomonas aeruginosa (strain LESB58).